Reading from the N-terminus, the 124-residue chain is Small ribosomal subunit protein uS12 (124 aa).

Position 89 is a 3-methylthioaspartic acid (aspartate 89).

The protein belongs to the universal ribosomal protein uS12 family. In terms of assembly, part of the 30S ribosomal subunit. Contacts proteins S8 and S17. May interact with IF1 in the 30S initiation complex.

In terms of biological role, with S4 and S5 plays an important role in translational accuracy. Interacts with and stabilizes bases of the 16S rRNA that are involved in tRNA selection in the A site and with the mRNA backbone. Located at the interface of the 30S and 50S subunits, it traverses the body of the 30S subunit contacting proteins on the other side and probably holding the rRNA structure together. The combined cluster of proteins S8, S12 and S17 appears to hold together the shoulder and platform of the 30S subunit. This is Small ribosomal subunit protein uS12 from Acinetobacter baumannii (strain AB307-0294).